A 421-amino-acid polypeptide reads, in one-letter code: C2H2 type master regulator of conidiophore development brlA (421 aa).

Residues Thr-228–Thr-242 show a composition bias toward polar residues. A disordered region spans residues Thr-228 to Asp-247. C2H2-type zinc fingers lie at residues Phe-309 to His-333 and His-339 to His-364. The segment covering Thr-361–Arg-370 has biased composition (basic residues). The segment at Thr-361–Asp-421 is disordered.

The protein localises to the nucleus. Functionally, brlA, abaA and wetA are pivotal regulators of conidiophore development and conidium maturation. They act individually and together to regulate their own expression and that of numerous other sporulation-specific genes. Binds promoters of target genes at brlA response elements (BREs) containing the conserved sequence 5'-(C/A)(A/G)AGGG(G/A)-3'. The polypeptide is C2H2 type master regulator of conidiophore development brlA (Aspergillus parasiticus (strain ATCC 56775 / NRRL 5862 / SRRC 143 / SU-1)).